Consider the following 107-residue polypeptide: Disintegrin lebestatin (107 aa).

The first 20 residues, 1 to 20 (MIQVLLVIICLAVFPFQGSS), serve as a signal peptide directing secretion. Positions 21 to 64 (KTLKSGNVNDYEVVNPGTVTGLPKGAVEEKHEPMKGNTLQKFPL) are excised as a propeptide. 4 cysteine pairs are disulfide-bonded: C65-C74, C70-C93, C71-C98, and C83-C100. Positions 65–105 (CTTGPCCRQCKLKPAGTTCWKTSRTSHYCTGKSCDCPSYPG) constitute a Disintegrin domain. The Cell attachment site; atypical (KTS) motif lies at 85–87 (KTS). The propeptide occupies 106-107 (NG).

As to quaternary structure, monomer. Expressed by the venom gland.

It localises to the secreted. In terms of biological role, specifically interacts with the alpha-1/beta-1 integrin (ITGA1/ITGB1). Exhibits highly inhibitory effects on cell adhesion and cell migration to collagens I and IV. Also shows in vivo anti-angiogenic activity. The chain is Disintegrin lebestatin from Macrovipera lebetinus (Levantine viper).